The chain runs to 227 residues: Isopentenyl-diphosphate Delta-isomerase 1 (227 aa).

Lysine 36 contributes to the substrate binding site. Mg(2+)-binding residues include histidine 40 and histidine 51. The Nudix hydrolase domain occupies 49-199 (LLHRAFSVFL…EIKITPWFKI (151 aa)). Substrate contacts are provided by arginine 70 and lysine 74. The active site involves cysteine 86. A substrate-binding site is contributed by serine 87. Mg(2+) contacts are provided by glutamate 146 and glutamate 148. Glutamate 148 is a catalytic residue. N6-acetyllysine is present on lysine 176. The short motif at 225–227 (YRI) is the Microbody targeting signal element.

The protein belongs to the IPP isomerase type 1 family. Monomer. Mg(2+) serves as cofactor.

The protein resides in the peroxisome. It carries out the reaction isopentenyl diphosphate = dimethylallyl diphosphate. It functions in the pathway isoprenoid biosynthesis; dimethylallyl diphosphate biosynthesis; dimethylallyl diphosphate from isopentenyl diphosphate: step 1/1. In terms of biological role, catalyzes the 1,3-allylic rearrangement of the homoallylic substrate isopentenyl (IPP) to its highly electrophilic allylic isomer, dimethylallyl diphosphate (DMAPP). This is Isopentenyl-diphosphate Delta-isomerase 1 (IDI1) from Pongo abelii (Sumatran orangutan).